The sequence spans 311 residues: Pyrimidine-specific ribonucleoside hydrolase RihA (311 aa).

His-240 is an active-site residue.

The protein belongs to the IUNH family. RihA subfamily.

Functionally, hydrolyzes with equal efficiency cytidine or uridine to ribose and cytosine or uracil, respectively. The chain is Pyrimidine-specific ribonucleoside hydrolase RihA from Escherichia coli O7:K1 (strain IAI39 / ExPEC).